The chain runs to 504 residues: WD repeat-containing protein 55 homolog (504 aa).

Acidic residues predominate over residues 32 to 49; the sequence is QEVVNESDSEIGEYDLGD. The segment at 32–135 is disordered; it reads QEVVNESDSE…NAFDMDEDDE (104 aa). Residues 66–76 show a composition bias toward polar residues; that stretch reads DSISSDGSFNP. Residues 77–95 are compositionally biased toward acidic residues; that stretch reads NDEDSDTDSDDSMLDEPDE. Residues 114–124 show a composition bias toward polar residues; that stretch reads SGSSNRNQDSD. WD repeat units follow at residues 158 to 197, 202 to 241, 245 to 283, 286 to 325, 328 to 367, and 412 to 451; these read KLEDFITDICFHPERHIIALATIIGDVHLYEYSNEENKLL, VHAKACRDVEFTEDGRSLITCSKDKSVMITDMETEKLKKL, AHDDAINKLLVLDERLFASGDDSGTVKLWDFRTKDSIFE, EIEDQVTQMITNDQKKLLLATSADGYLTTFNIGARKLYVQ, PYEEELNCMGIYRGNSKLVVGTSKGRLYSYNWGYFGYHCD, and QHNMPIESMDINTNGELLASSSHNNDVRFWNVKYFEDFGD. The segment at 484–504 is disordered; sequence AKEDNNDNENDDATAGPSNTT.

Belongs to the WD repeat WDR55 family.

The protein is WD repeat-containing protein 55 homolog of Drosophila willistoni (Fruit fly).